Reading from the N-terminus, the 584-residue chain is Sperm-associated microtubule inner protein 4 (584 aa).

Its subcellular location is the cytoplasm. The protein localises to the cytoskeleton. It is found in the microtubule organizing center. It localises to the centrosome. The protein resides in the flagellum axoneme. Its function is as follows. Microtubule inner protein (MIP) part of the dynein-decorated doublet microtubules (DMTs) in flagellum axoneme. May serve to reinforce and thus stabilize the microtubule structure in the sperm flagella. This Bos taurus (Bovine) protein is Sperm-associated microtubule inner protein 4 (SPMIP4).